Reading from the N-terminus, the 258-residue chain is Imidazole glycerol phosphate synthase subunit HisF (258 aa).

Residues Asp-11 and Asp-130 contribute to the active site.

Belongs to the HisA/HisF family. As to quaternary structure, heterodimer of HisH and HisF.

The protein resides in the cytoplasm. The enzyme catalyses 5-[(5-phospho-1-deoxy-D-ribulos-1-ylimino)methylamino]-1-(5-phospho-beta-D-ribosyl)imidazole-4-carboxamide + L-glutamine = D-erythro-1-(imidazol-4-yl)glycerol 3-phosphate + 5-amino-1-(5-phospho-beta-D-ribosyl)imidazole-4-carboxamide + L-glutamate + H(+). The protein operates within amino-acid biosynthesis; L-histidine biosynthesis; L-histidine from 5-phospho-alpha-D-ribose 1-diphosphate: step 5/9. Its function is as follows. IGPS catalyzes the conversion of PRFAR and glutamine to IGP, AICAR and glutamate. The HisF subunit catalyzes the cyclization activity that produces IGP and AICAR from PRFAR using the ammonia provided by the HisH subunit. The sequence is that of Imidazole glycerol phosphate synthase subunit HisF from Enterobacter sp. (strain 638).